A 289-amino-acid chain; its full sequence is ATP synthase gamma chain (289 aa).

This sequence belongs to the ATPase gamma chain family. F-type ATPases have 2 components, CF(1) - the catalytic core - and CF(0) - the membrane proton channel. CF(1) has five subunits: alpha(3), beta(3), gamma(1), delta(1), epsilon(1). CF(0) has three main subunits: a, b and c.

It localises to the cell inner membrane. In terms of biological role, produces ATP from ADP in the presence of a proton gradient across the membrane. The gamma chain is believed to be important in regulating ATPase activity and the flow of protons through the CF(0) complex. The sequence is that of ATP synthase gamma chain from Nitrosococcus oceani (strain ATCC 19707 / BCRC 17464 / JCM 30415 / NCIMB 11848 / C-107).